Consider the following 140-residue polypeptide: FlaA locus uncharacterized protein YlxG (140 aa).

The interval 1–21 is disordered; that stretch reads MTSISSEYKLPEKTNTVSTNN.

Belongs to the FlgD family.

The sequence is that of FlaA locus uncharacterized protein YlxG (ylxG) from Bacillus subtilis (strain 168).